Consider the following 382-residue polypeptide: DNA double-strand break repair protein Mre11 (382 aa).

Residues D8, H10, D49, and D84 each coordinate Mn(2+). H85 serves as the catalytic Proton donor. Residues H156, H187, and H189 each contribute to the Mn(2+) site.

It belongs to the MRE11/RAD32 family. As to quaternary structure, homodimer. Forms a heterotetramer composed of two Mre11 subunits and two Rad50 subunits. Interacts with Rad50 and HerA. It depends on Mn(2+) as a cofactor.

Nuclease activity is regulated by Rad50. Functionally, part of the Rad50/Mre11 complex, which is involved in the early steps of DNA double-strand break (DSB) repair. The complex may facilitate opening of the processed DNA ends to aid in the recruitment of HerA and NurA. Mre11 binds to DSB ends and has both double-stranded 3'-5' exonuclease activity and single-stranded endonuclease activity. Recruited immediately to chromosomal DNA after gamma irradiation, and remains DNA bound in the course of DNA repair. The protein is DNA double-strand break repair protein Mre11 of Sulfolobus acidocaldarius (strain ATCC 33909 / DSM 639 / JCM 8929 / NBRC 15157 / NCIMB 11770).